A 118-amino-acid chain; its full sequence is Fluoride-specific ion channel FluC 2 (118 aa).

A run of 4 helical transmembrane segments spans residues 1–21, 33–53, 55–75, and 93–113; these read MIEALLVATGGFFGAITRFAI, FPIATFLINITGAFLLGYIIG, GVTTGWQLLLGTGFMGAFTTF, and TFLLYLSATYIVGILFAFLGM. 2 residues coordinate Na(+): G70 and T73.

The protein belongs to the fluoride channel Fluc/FEX (TC 1.A.43) family.

The protein resides in the cell membrane. The enzyme catalyses fluoride(in) = fluoride(out). With respect to regulation, na(+) is not transported, but it plays an essential structural role and its presence is essential for fluoride channel function. In terms of biological role, fluoride-specific ion channel. Important for reducing fluoride concentration in the cell, thus reducing its toxicity. The protein is Fluoride-specific ion channel FluC 2 of Bacillus cereus (strain ZK / E33L).